A 233-amino-acid chain; its full sequence is Antiholin-like protein LrgB (233 aa).

The next 6 membrane-spanning stretches (helical) occupy residues 5-25 (LGINTPYFGILVSLIPFVIAT), 33-53 (GFFLLAPLFVSMVAGIAFLKL), 63-83 (IGGDIINFFLEPATICFAIPL), 97-117 (IFGGIAVGTIIALLLIYLVAI), 152-172 (LTSLAVILNAVVISALGAKIV), and 212-232 (IAVVIVGVIVVAVVPILAPIL).

This sequence belongs to the CidB/LrgB family. LrgB subfamily.

It is found in the cell membrane. Functionally, inhibits the expression or activity of extracellular murein hydrolases by interacting, possibly with LrgA, with the holin-like proteins CidA and/or CidB. The LrgAB and CidAB proteins may affect the proton motive force of the membrane. May be involved in programmed cell death (PCD), possibly triggering PCD in response to antibiotics and environmental stresses. The protein is Antiholin-like protein LrgB of Staphylococcus epidermidis (strain ATCC 12228 / FDA PCI 1200).